A 127-amino-acid polypeptide reads, in one-letter code: Small ribosomal subunit protein bS6 (127 aa).

This sequence belongs to the bacterial ribosomal protein bS6 family.

In terms of biological role, binds together with bS18 to 16S ribosomal RNA. The sequence is that of Small ribosomal subunit protein bS6 from Sulfurovum sp. (strain NBC37-1).